The primary structure comprises 136 residues: FK506-binding protein 2 (136 aa).

An N-terminal signal peptide occupies residues 1–17 (MLSQIWILFTFMVCVIA). A PPIase FKBP-type domain is found at 45–134 (GDMVSVHYTG…DFDVELVDIA (90 aa)).

This sequence belongs to the FKBP-type PPIase family. FKBP2 subfamily.

The protein resides in the endoplasmic reticulum. The enzyme catalyses [protein]-peptidylproline (omega=180) = [protein]-peptidylproline (omega=0). Its activity is regulated as follows. Inhibited by both FK506 and rapamycin. Its function is as follows. PPIases accelerate the folding of proteins. It catalyzes the cis-trans isomerization of proline imidic peptide bonds in oligopeptides. The protein is FK506-binding protein 2 (FPR2) of Candida glabrata (strain ATCC 2001 / BCRC 20586 / JCM 3761 / NBRC 0622 / NRRL Y-65 / CBS 138) (Yeast).